The sequence spans 169 residues: Peptide methionine sulfoxide reductase MsrA (169 aa).

The active site involves Cys11.

This sequence belongs to the MsrA Met sulfoxide reductase family.

It carries out the reaction L-methionyl-[protein] + [thioredoxin]-disulfide + H2O = L-methionyl-(S)-S-oxide-[protein] + [thioredoxin]-dithiol. The catalysed reaction is [thioredoxin]-disulfide + L-methionine + H2O = L-methionine (S)-S-oxide + [thioredoxin]-dithiol. Its function is as follows. Has an important function as a repair enzyme for proteins that have been inactivated by oxidation. Catalyzes the reversible oxidation-reduction of methionine sulfoxide in proteins to methionine. The protein is Peptide methionine sulfoxide reductase MsrA of Leifsonia xyli subsp. xyli (strain CTCB07).